The primary structure comprises 340 residues: MTVAESTCALVSTQPSIGKPTGGIATYSPAYTIVPTYECFNRCTYCNFRTDPGESSWMSLSAAEDIFKRLQNEQVCEILILSGEVHPNSPKRQVWFQRIYDLCKLALTLGFLPHTNAGPLSFAEMQELKSVNVSMGLMLEQLTPKLLETVHRHAPSKLPELRLQQLEWAGELQIPFTTGLLLGIGETNDDCWETLEAISKLHQRYHHIQEVILQPHSPGNQQTFNAPAFNPHQLPEVIAKARQILPSDITIQIPPNLVKDERWLLACVEAGARDLGGIGPKDEVNPDYPHLQAEELREILQPAGWDLMPRLPVYPQFDGWLSGELQASVRRWRELVIGNW.

The Radical SAM core domain occupies 25–256 (ATYSPAYTIV…SDITIQIPPN (232 aa)). Residues Cys39, Cys43, and Cys46 each contribute to the [4Fe-4S] cluster site.

It belongs to the radical SAM superfamily. CofG family. Consists of two subunits, CofG and CofH. The cofactor is [4Fe-4S] cluster.

It carries out the reaction 5-amino-5-(4-hydroxybenzyl)-6-(D-ribitylimino)-5,6-dihydrouracil + S-adenosyl-L-methionine = 7,8-didemethyl-8-hydroxy-5-deazariboflavin + 5'-deoxyadenosine + L-methionine + NH4(+) + H(+). It functions in the pathway cofactor biosynthesis; coenzyme F0 biosynthesis. In terms of biological role, catalyzes the radical-mediated synthesis of 7,8-didemethyl-8-hydroxy-5-deazariboflavin from 5-amino-5-(4-hydroxybenzyl)-6-(D-ribitylimino)-5,6-dihydrouracil. The chain is 7,8-didemethyl-8-hydroxy-5-deazariboflavin synthase from Trichormus variabilis (strain ATCC 29413 / PCC 7937) (Anabaena variabilis).